A 639-amino-acid polypeptide reads, in one-letter code: Wall-associated receptor kinase-like 15 (639 aa).

A signal peptide spans 1-25 (MELPWLSLTTFTLSLLIYFSSTTQA). At 26 to 282 (FKRCPNCGST…KRKSCKRWSN (257 aa)) the chain is on the extracellular side. Asparagine 68, asparagine 115, asparagine 126, asparagine 141, and asparagine 241 each carry an N-linked (GlcNAc...) asparagine glycan. A helical membrane pass occupies residues 283–303 (LPLLGGLAGGVGAILIAGFIT). Residues 304–639 (KTIVSKQNRR…KEIENILHGI (336 aa)) are Cytoplasmic-facing. In terms of domain architecture, Protein kinase spans 354-639 (FAKSNLLGFG…KEIENILHGI (286 aa)). ATP contacts are provided by residues 360-368 (LGFGGFGEV) and lysine 382. The active-site Proton acceptor is the aspartate 484.

This sequence belongs to the protein kinase superfamily. Ser/Thr protein kinase family.

It is found in the membrane. It catalyses the reaction L-seryl-[protein] + ATP = O-phospho-L-seryl-[protein] + ADP + H(+). It carries out the reaction L-threonyl-[protein] + ATP = O-phospho-L-threonyl-[protein] + ADP + H(+). Its function is as follows. Putative serine/threonine-protein kinase that may function as a signaling receptor of extracellular matrix component. This is Wall-associated receptor kinase-like 15 (WAKL15) from Arabidopsis thaliana (Mouse-ear cress).